The sequence spans 582 residues: Formate--tetrahydrofolate ligase (582 aa).

65–72 (TPLGEGKT) is an ATP binding site.

Belongs to the formate--tetrahydrofolate ligase family.

The catalysed reaction is (6S)-5,6,7,8-tetrahydrofolate + formate + ATP = (6R)-10-formyltetrahydrofolate + ADP + phosphate. Its pathway is one-carbon metabolism; tetrahydrofolate interconversion. The polypeptide is Formate--tetrahydrofolate ligase (Vibrio vulnificus (strain CMCP6)).